The sequence spans 303 residues: Probable aspartoacylase (303 aa).

Residues His13 and Glu16 each coordinate Zn(2+). Substrate contacts are provided by residues Arg55 and 62–63; that span reads NR. His104 provides a ligand contact to Zn(2+). Residues Glu162 and Tyr273 each coordinate substrate.

It belongs to the AspA/AstE family. Aspartoacylase subfamily. Requires Zn(2+) as cofactor.

The catalysed reaction is an N-acyl-L-aspartate + H2O = a carboxylate + L-aspartate. This chain is Probable aspartoacylase, found in Parasynechococcus marenigrum (strain WH8102).